We begin with the raw amino-acid sequence, 338 residues long: ATP synthase subunit a (338 aa).

A helical transmembrane segment spans residues 15–35; it reads IAVLVMPLLLGFGAPIYAAAE. The disordered stretch occupies residues 45 to 66; that stretch reads AAAVHTDEAHGEAGEHAEGGHG. Residues 49-65 show a composition bias toward basic and acidic residues; it reads HTDEAHGEAGEHAEGGH. A run of 7 helical transmembrane segments spans residues 109–129, 174–194, 199–219, 238–258, 262–282, 287–307, and 308–328; these read HVVF…YVGN, LLTV…PYGA, NINV…VSAI, ALWI…PFAL, LFAN…ISFI, IVAI…EIFV, and SFLQ…LGSA.

The protein belongs to the ATPase A chain family. F-type ATPases have 2 components, CF(1) - the catalytic core - and CF(0) - the membrane proton channel. CF(1) has five subunits: alpha(3), beta(3), gamma(1), delta(1), epsilon(1). CF(0) has four main subunits: a, b, b' and c.

Its subcellular location is the cell inner membrane. Its function is as follows. Key component of the proton channel; it plays a direct role in the translocation of protons across the membrane. The protein is ATP synthase subunit a of Chlorobium phaeobacteroides (strain BS1).